We begin with the raw amino-acid sequence, 452 residues long: Dimethyladenosine transferase 2, mitochondrial (452 aa).

I46, E99, and D125 together coordinate S-adenosyl-L-methionine. Residues 408-452 (ANDEPNLEDGVTLPEEDDAEADEIIEEESPVPATTPVKRRRKASS) form a disordered region. Over residues 421–436 (PEEDDAEADEIIEEES) the composition is skewed to acidic residues.

Belongs to the class I-like SAM-binding methyltransferase superfamily. rRNA adenine N(6)-methyltransferase family. KsgA subfamily.

It is found in the mitochondrion. Its function is as follows. Probable S-adenosyl-L-methionine-dependent methyltransferase which specifically dimethylates mitochondrial 12S rRNA at the conserved stem loop. Also required for basal transcription of mitochondrial DNA. Also regulates mitochondrial DNA copy number. Stimulates transcription independently of the methyltransferase activity. In Drosophila melanogaster (Fruit fly), this protein is Dimethyladenosine transferase 2, mitochondrial (mtTFB2).